A 205-amino-acid chain; its full sequence is Protein Nef (205 aa).

Gly-2 carries the N-myristoyl glycine; by host lipid modification. Ser-6 is modified (phosphoserine; by host). Residues 62–65 (DNEE) are acidic; interacts with host PACS1 and PACS2; stabilizes the interaction of NEF/MHC-I with host AP1M1; necessary for MHC-I internalization. Residues 69-78 (PVRPQVPTRP) are SH3-binding; interaction with Src family tyrosine kinases. The PxxP; stabilizes the interaction of NEF/MHC-I with host AP1M1; necessary for MHC-I internalization signature appears at 72 to 75 (PQVP). The tract at residues 108-124 (EILDLWVYHTQGFFPDW) is mediates dimerization, Nef-PTE1 interaction. A binding to ATP6V1H region spans residues 148-180 (LTEEQVEQANEGDNNCLLHPICQHGMEDEDKEV). Residues 164 to 165 (LL) carry the Dileucine internalization motif; necessary for CD4 internalization motif. A Diacidic; necessary for CD4 internalization motif is present at residues 174 to 175 (ED).

The protein belongs to the lentivirus primate group Nef protein family. Monomer; cytosolic form. Homodimer; membrane bound form. Interacts with Nef associated p21-activated kinase (PAK2); this interaction activates PAK2. Associates with the Nef-MHC-I-AP1 complex; this complex is required for MHC-I internalization. Interacts (via C-terminus) with host PI3-kinase. Interacts with host PACS1; this interaction seems to be weak. Interacts with host PACS2. Interacts with host LCK and MAPK3; these interactions inhibit the kinase activity of the latter. Interacts with host ATP6V1H; this interaction may play a role in CD4 endocytosis. Associates with the CD4-Nef-AP2 complex; this complex is required for CD4 internalization. Interacts with host AP2 subunit alpha and AP2 subunit sigma2. Interacts with TCR-zeta chain; this interaction up-regulates the Fas ligand (FasL) surface expression. Interacts with host HCK, LYN, and SRC; these interactions activate the Src family kinases. Interacts with MAP3K5; this interaction inhibits the Fas and TNFR-mediated death signals. Interacts with beta-COP and PTE1. Interacts with human RACK1; this increases Nef phosphorylation by PKC. Interacts with TP53; this interaction decreases the half-life of TP53, protecting the infected cell against p53-mediated apoptosis. In terms of processing, the virion-associated Nef proteins are cleaved by the viral protease to release the soluble C-terminal core protein. Nef is probably cleaved concomitantly with viral structural proteins on maturation of virus particles. Post-translationally, myristoylated. Phosphorylated on serine residues, probably by host PKCdelta and theta.

Its subcellular location is the host cell membrane. It is found in the virion. The protein localises to the secreted. The protein resides in the host Golgi apparatus membrane. Functionally, factor of infectivity and pathogenicity, required for optimal virus replication. Alters numerous pathways of T-lymphocyte function and down-regulates immunity surface molecules in order to evade host defense and increase viral infectivity. Alters the functionality of other immunity cells, like dendritic cells, monocytes/macrophages and NK cells. In terms of biological role, in infected CD4(+) T-lymphocytes, down-regulates the surface MHC-I, mature MHC-II, CD4, CD28, CCR5 and CXCR4 molecules. Mediates internalization and degradation of host CD4 through the interaction of with the cytoplasmic tail of CD4, the recruitment of AP-2 (clathrin adapter protein complex 2), internalization through clathrin coated pits, and subsequent transport to endosomes and lysosomes for degradation. Diverts host MHC-I molecules to the trans-Golgi network-associated endosomal compartments by an endocytic pathway to finally target them for degradation. MHC-I down-regulation may involve AP-1 (clathrin adapter protein complex 1) or possibly Src family kinase-ZAP70/Syk-PI3K cascade recruited by PACS2. In consequence infected cells are masked for immune recognition by cytotoxic T-lymphocytes. Decreasing the number of immune receptors also prevents reinfection by more HIV particles (superinfection). Down-regulates host SERINC3 and SERINC5 thereby excluding these proteins from the viral particles. Virion infectivity is drastically higher when SERINC3 or SERINC5 are excluded from the viral envelope, because these host antiviral proteins impair the membrane fusion event necessary for subsequent virion penetration. Its function is as follows. Bypasses host T-cell signaling by inducing a transcriptional program nearly identical to that of anti-CD3 cell activation. Interaction with TCR-zeta chain up-regulates the Fas ligand (FasL). Increasing surface FasL molecules and decreasing surface MHC-I molecules on infected CD4(+) cells send attacking cytotoxic CD8+ T-lymphocytes into apoptosis. Plays a role in optimizing the host cell environment for viral replication without causing cell death by apoptosis. Protects the infected cells from apoptosis in order to keep them alive until the next virus generation is ready to strike. Inhibits the Fas and TNFR-mediated death signals by blocking MAP3K5/ASK1. Decreases the half-life of TP53, protecting the infected cell against p53-mediated apoptosis. Inhibits the apoptotic signals regulated by the Bcl-2 family proteins through the formation of a Nef/PI3-kinase/PAK2 complex that leads to activation of PAK2 and induces phosphorylation of host BAD. Functionally, extracellular Nef protein targets CD4(+) T-lymphocytes for apoptosis by interacting with CXCR4 surface receptors. The sequence is that of Protein Nef from Simian immunodeficiency virus (isolate CPZ GAB1) (SIV-cpz).